Consider the following 545-residue polypeptide: Phenylalanine--tRNA ligase beta subunit (545 aa).

Residues 268–343 form the B5 domain; that stretch reads FLHKIQNVRE…MSIGYNNLEP (76 aa). 4 residues coordinate Mg(2+): D321, D327, E330, and D331.

It belongs to the phenylalanyl-tRNA synthetase beta subunit family. Type 2 subfamily. In terms of assembly, tetramer of two alpha and two beta subunits. Mg(2+) serves as cofactor.

It localises to the cytoplasm. The catalysed reaction is tRNA(Phe) + L-phenylalanine + ATP = L-phenylalanyl-tRNA(Phe) + AMP + diphosphate + H(+). This is Phenylalanine--tRNA ligase beta subunit from Saccharolobus islandicus (strain M.16.27) (Sulfolobus islandicus).